Consider the following 1033-residue polypeptide: MEVGGGSEECCVKVAVHVRPLIGDEKVQGCKDCVTVIPGKPQVQIGTHSFTFDHVYGSTSSPSWMFEECIVPLVDGLFQGYNATVLAYGQTGSGKTYTMGTGFKGGSQTGIIPQVMNALFSKIENLKHQIEFQLHVSFIEILKEEVRDLLDPTFLNKSDTASANTGKVNVPGKPPIQIRESSDGVITLAGSTEVSVSTLKEMGACLEQGSLSRATGSTNMNNQSSRSHAIFTITLEQMRKLNPVSGDGNPNDSMSEEYLCAKLHLVDLAGSERAKRTGSDGMRFKEGVHINKGLLALGNVISALGDEKKRKEGVHVPYRDSKLTRLLQDSLGGNSRTVMIACISPADINAEETLNTLKYANRARNIQNKPVVNRDPMSNEILKMRQQLEYLQAELCARGGSGEVQVLNERIAWLEAANEDLCRELYEYRSRCTIVEQREMDAQDGSPCSVESDGLKRNLRSRESRDNQIVETMIGGDSREIEEGAAKEWEHMLLQNTMDKELHELNRQLEEKESEMKVFGGHTVALKQHFGKKIQELEEEKRAVQQERDRLLAEIENLSAGSEGQALKVHDIHAQKLKSLEAQIMDLKKKQENQVQLLKKKQKSDEAAKRLQDEIQYIKAQKVQLQHRIKQEAEQFRQWKASREKELLQLRKEGRRNEYERHKLQALNQRQKLVLQRKTEEAAMATKRLKELLEARKSAARDNLAIANGNGTNGKINEKGLQRWLDHELEVMVNVHEVRFEYEKQSQVRAALAEELAVLKQVDELDSKGPSPSRGKNGCARGSSLSPNARVARISSLEHMLGISSNSLVAMASQLSEAEERERAFTNRGRWNQLRSMGDAKNLLQYMFNSLGDSRYQLWEKGIEIREMKEQLKELVGLLRQSELQRKEVENELKLREQAVAIALATSATGNSPISLKHIDDDVKSSSSPMSVPAQKQLKYSPGIVNGPARESAAFIGQTRKMIPLGQLPMKNLVANGQAGNGKLWRWKRSHHQWLVQFKWKWQKPWRLSEWIRHSDETIIRARPRSQVLTYRV.

Positions 11–366 (CVKVAVHVRP…LKYANRARNI (356 aa)) constitute a Kinesin motor domain. 89-96 (GQTGSGKT) lines the ATP pocket. The interval 443 to 462 (QDGSPCSVESDGLKRNLRSR) is disordered. The span at 453–462 (DGLKRNLRSR) shows a compositional bias: basic and acidic residues. The stretch at 525-638 (ALKQHFGKKI…IKQEAEQFRQ (114 aa)) forms a coiled coil. The interval 763–785 (DELDSKGPSPSRGKNGCARGSSL) is disordered. Positions 863-895 (IEIREMKEQLKELVGLLRQSELQRKEVENELKL) form a coiled coil.

It belongs to the TRAFAC class myosin-kinesin ATPase superfamily. Kinesin family. KIN-4 subfamily. In terms of assembly, homodimer. Expressed in cotton fibers.

The protein localises to the cytoplasm. Its function is as follows. Kinesin-like motor protein involved in the control of the oriented deposition of cellulose microfibrils. The polypeptide is Kinesin-like protein KIN-4A (Gossypium hirsutum (Upland cotton)).